The primary structure comprises 411 residues: Serine hydroxymethyltransferase (411 aa).

120–122 (GHL) contacts (6S)-5,6,7,8-tetrahydrofolate. At lysine 225 the chain carries N6-(pyridoxal phosphate)lysine. A (6S)-5,6,7,8-tetrahydrofolate-binding site is contributed by 350 to 352 (SPF).

The protein belongs to the SHMT family. As to quaternary structure, homodimer. Pyridoxal 5'-phosphate is required as a cofactor.

It is found in the cytoplasm. It catalyses the reaction (6R)-5,10-methylene-5,6,7,8-tetrahydrofolate + glycine + H2O = (6S)-5,6,7,8-tetrahydrofolate + L-serine. The protein operates within one-carbon metabolism; tetrahydrofolate interconversion. Its pathway is amino-acid biosynthesis; glycine biosynthesis; glycine from L-serine: step 1/1. Its function is as follows. Catalyzes the reversible interconversion of serine and glycine with tetrahydrofolate (THF) serving as the one-carbon carrier. This reaction serves as the major source of one-carbon groups required for the biosynthesis of purines, thymidylate, methionine, and other important biomolecules. Also exhibits THF-independent aldolase activity toward beta-hydroxyamino acids, producing glycine and aldehydes, via a retro-aldol mechanism. In Lactobacillus acidophilus (strain ATCC 700396 / NCK56 / N2 / NCFM), this protein is Serine hydroxymethyltransferase.